The chain runs to 1372 residues: Serine protease pic autotransporter (1372 aa).

Positions 1–55 are cleaved as a signal peptide; it reads MNKVYSLKYCPVTGGLIAVSELARRVIKKTCRRLTHILLAGIPAICLCYSQISQA. In terms of domain architecture, Peptidase S6 spans 56 to 301; that stretch reads GIVRSDIAYQ…NVIPTDYLNQ (246 aa). Residues H127, D155, and S258 each act as charge relay system in the active site. Positions 1106-1372 constitute an Autotransporter domain; it reads DTNGDAGAWA…AVNANFRYMF (267 aa).

Post-translationally, cleaved to release the mature protein from the outer membrane.

It localises to the periplasm. The protein localises to the secreted. It is found in the cell surface. The protein resides in the cell outer membrane. Involved in intestinal colonization, displays in vitro mucinolytic activity, serum resistance, and hemagglutination. Important to penetrate the intestinal mucus layer. The polypeptide is Serine protease pic autotransporter (pic) (Shigella flexneri).